Reading from the N-terminus, the 157-residue chain is Isotocin-neurophysin IT 1 (157 aa).

Positions 1–20 are cleaved as a signal peptide; that stretch reads MFGTSVSALCLLFLLSVCTA. A disulfide bridge connects residues Cys-21 and Cys-26. Position 29 is a glycine amide (Gly-29). 7 disulfide bridges follow: Cys-42-Cys-86, Cys-45-Cys-59, Cys-53-Cys-76, Cys-60-Cys-66, Cys-93-Cys-106, Cys-100-Cys-118, and Cys-107-Cys-112.

Belongs to the vasopressin/oxytocin family. Post-translationally, seven disulfide bonds are present in neurophysin.

It is found in the secreted. Functionally, isotocin causes contraction of smooth muscles. This chain is Isotocin-neurophysin IT 1, found in Oncorhynchus masou (Cherry salmon).